A 109-amino-acid chain; its full sequence is uncharacterized protein (109 aa).

3 helical membrane passes run 7 to 27, 37 to 57, and 63 to 83; these read IITIGICIVAVQFTRLLPFFV, YIRYLGKVLPPAMFGMLVVYC, and ILTGYHGIPDLLAGIVVLGLH.

The protein belongs to the AzlD/HI_1737/HP1330 family.

It localises to the cell membrane. This is an uncharacterized protein from Haemophilus influenzae (strain ATCC 51907 / DSM 11121 / KW20 / Rd).